Reading from the N-terminus, the 1588-residue chain is Ubiquitin carboxyl-terminal hydrolase 54 (1588 aa).

Arg12 carries the omega-N-methylarginine modification. A USP domain is found at Lys31–Pro352. Residue Cys42 is the Nucleophile of the active site. The Zn(2+) site is built by His67, Cys69, Cys74, Cys77, His133, Cys145, Cys150, His153, Cys166, Cys169, Cys225, and Cys229. The active-site Proton acceptor is His302. Composition is skewed to basic and acidic residues over residues Gly382–Gln391 and Ser424–Ala434. Disordered stretches follow at residues Gly382–Arg519, Phe555–His577, and Glu601–Ser624. Ser424 is modified (phosphoserine). The segment covering Thr453–Gly471 has biased composition (polar residues). The span at Thr499–Lys513 shows a compositional bias: low complexity. The segment covering Phe555–Gly572 has biased composition (basic and acidic residues). Low complexity predominate over residues Glu601–Ser616. Residues Ser613 and Ser616 each carry the phosphoserine modification. Residues Glu682–Gly712 adopt a coiled-coil conformation. Disordered regions lie at residues Arg801–Thr834, Gln1089–Tyr1182, Ser1221–Arg1242, and Trp1491–Gly1561. The span at Gln808 to Gln826 shows a compositional bias: low complexity. The segment covering Gly1126–Cys1147 has biased composition (basic and acidic residues). At Ser1138 the chain carries Phosphoserine. Over residues Pro1510–Ser1524 the composition is skewed to polar residues. Residues Arg1536–Arg1547 are compositionally biased toward basic and acidic residues.

It belongs to the peptidase C19 family.

It carries out the reaction Thiol-dependent hydrolysis of ester, thioester, amide, peptide and isopeptide bonds formed by the C-terminal Gly of ubiquitin (a 76-residue protein attached to proteins as an intracellular targeting signal).. Its function is as follows. Deubiquitinase that specifically mediates 'Lys-63'-linked deubiquitination of substrates with a polyubiquitin chain composed of at least 3 ubiquitins. Specifically recognizes ubiquitin chain in position S2 and catalyzes cleavage of polyubiquitin within 'Lys-63'-linked chains. Not able to deubiquitinate substrates with shorter ubiquitin chains. Mediates deubiquitination of PLK4, maintaining PLK4 stability by reducing its ubiquitination-mediated degradation. The sequence is that of Ubiquitin carboxyl-terminal hydrolase 54 (Usp54) from Mus musculus (Mouse).